The sequence spans 319 residues: Probable cytochrome c oxidase subunit 2 (319 aa).

An N-terminal signal peptide occupies residues 1-33; it reads MSPNGSDRSPRRPMRRKLLQALTAGLVLATATG. 2 helical membrane passes run 63 to 83 and 101 to 121; these read WAAA…ATIF and MPIE…LFYF. His-227, Cys-262, Cys-266, and His-270 together coordinate Cu cation.

Belongs to the cytochrome c oxidase subunit 2 family. The cofactor is Cu cation. Heme serves as cofactor.

It localises to the cell membrane. The enzyme catalyses 4 Fe(II)-[cytochrome c] + O2 + 8 H(+)(in) = 4 Fe(III)-[cytochrome c] + 2 H2O + 4 H(+)(out). Its function is as follows. Subunits I and II form the functional core of the enzyme complex. Electrons originating in cytochrome c are transferred via heme a and Cu(A) to the binuclear center formed by heme a3 and Cu(B). The sequence is that of Probable cytochrome c oxidase subunit 2 (ctaC) from Streptomyces avermitilis (strain ATCC 31267 / DSM 46492 / JCM 5070 / NBRC 14893 / NCIMB 12804 / NRRL 8165 / MA-4680).